Here is a 638-residue protein sequence, read N- to C-terminus: Chaperone protein DnaK (638 aa).

Thr-197 bears the Phosphothreonine; by autocatalysis mark. The interval 598–638 (QQSAPSGAAAGPDEGAPSGSGGTSGTRGGDDVIDAEFTETK) is disordered. A compositionally biased stretch (gly residues) spans 615–624 (SGSGGTSGTR). Acidic residues predominate over residues 628-638 (DVIDAEFTETK).

This sequence belongs to the heat shock protein 70 family.

In terms of biological role, acts as a chaperone. The chain is Chaperone protein DnaK from Gloeobacter violaceus (strain ATCC 29082 / PCC 7421).